A 417-amino-acid chain; its full sequence is Testis-specific Y-encoded-like protein 5 (417 aa).

The segment covering 1 to 25 (MSGRSRGRKSSRAKNRGKGRAKARV) has biased composition (basic residues). 4 disordered regions span residues 1-55 (MSGR…QVQA), 93-112 (AAGD…AASL), 127-202 (GTVG…EGSM), and 391-417 (KGKE…SQSN). Positions 27–37 (PAPDDAPRDPD) are enriched in basic and acidic residues. Positions 93 to 103 (AAGDHGQAAAR) are enriched in low complexity. A compositionally biased stretch (basic and acidic residues) spans 182-191 (GEEKKEERDA). Residues 406 to 417 (METTQPGVSQSN) are compositionally biased toward polar residues.

This sequence belongs to the nucleosome assembly protein (NAP) family. As to quaternary structure, interacts with USP7.

Functionally, involved in modulation of cell growth and cellular response to gamma radiation probably via regulation of the Akt signaling pathway. Involved in regulation of p53/TP53. Suppresses p53/TP53 protein levels and promotes its ubiquitination; the function is dependent on USP7 and independent on MDM2. Proposed to displace p53/TP53 from interaction with USP7. This Homo sapiens (Human) protein is Testis-specific Y-encoded-like protein 5 (TSPYL5).